Reading from the N-terminus, the 388-residue chain is Na(+)/H(+) antiporter NhaA (388 aa).

Transmembrane regions (helical) follow at residues Phe-8 to Ile-28, Pro-33 to Leu-53, Leu-59 to Val-79, Leu-95 to Phe-115, Gly-125 to Ser-145, Val-154 to Phe-174, Val-179 to Trp-199, Val-217 to Ile-237, Val-259 to Val-279, Ile-287 to Phe-307, Ile-328 to Leu-348, and Leu-363 to Val-383.

This sequence belongs to the NhaA Na(+)/H(+) (TC 2.A.33) antiporter family.

The protein resides in the cell inner membrane. The catalysed reaction is Na(+)(in) + 2 H(+)(out) = Na(+)(out) + 2 H(+)(in). In terms of biological role, na(+)/H(+) antiporter that extrudes sodium in exchange for external protons. This chain is Na(+)/H(+) antiporter NhaA, found in Photorhabdus laumondii subsp. laumondii (strain DSM 15139 / CIP 105565 / TT01) (Photorhabdus luminescens subsp. laumondii).